The following is a 118-amino-acid chain: Large ribosomal subunit protein bL20 (118 aa).

It belongs to the bacterial ribosomal protein bL20 family.

Functionally, binds directly to 23S ribosomal RNA and is necessary for the in vitro assembly process of the 50S ribosomal subunit. It is not involved in the protein synthesizing functions of that subunit. The polypeptide is Large ribosomal subunit protein bL20 (Serratia proteamaculans (strain 568)).